A 1066-amino-acid chain; its full sequence is DNA-directed RNA polymerase subunit beta (1066 aa).

Belongs to the RNA polymerase beta chain family. As to quaternary structure, in plastids the minimal PEP RNA polymerase catalytic core is composed of four subunits: alpha, beta, beta', and beta''. When a (nuclear-encoded) sigma factor is associated with the core the holoenzyme is formed, which can initiate transcription.

It is found in the plastid. The protein localises to the chloroplast. The catalysed reaction is RNA(n) + a ribonucleoside 5'-triphosphate = RNA(n+1) + diphosphate. Functionally, DNA-dependent RNA polymerase catalyzes the transcription of DNA into RNA using the four ribonucleoside triphosphates as substrates. This is DNA-directed RNA polymerase subunit beta from Coffea arabica (Arabian coffee).